We begin with the raw amino-acid sequence, 628 residues long: Biosynthetic arginine decarboxylase (628 aa).

Lys-99 carries the post-translational modification N6-(pyridoxal phosphate)lysine. 279 to 289 (VDVGGGLGIDY) contributes to the substrate binding site.

It belongs to the Orn/Lys/Arg decarboxylase class-II family. SpeA subfamily. It depends on Mg(2+) as a cofactor. The cofactor is pyridoxal 5'-phosphate.

The enzyme catalyses L-arginine + H(+) = agmatine + CO2. In terms of biological role, catalyzes the biosynthesis of agmatine from arginine. The polypeptide is Biosynthetic arginine decarboxylase (Xylella fastidiosa (strain 9a5c)).